Here is a 434-residue protein sequence, read N- to C-terminus: Glutamate-1-semialdehyde 2,1-aminomutase 1 (434 aa).

At K270 the chain carries N6-(pyridoxal phosphate)lysine.

The protein belongs to the class-III pyridoxal-phosphate-dependent aminotransferase family. HemL subfamily. As to quaternary structure, homodimer. The cofactor is pyridoxal 5'-phosphate.

Its subcellular location is the cytoplasm. The enzyme catalyses (S)-4-amino-5-oxopentanoate = 5-aminolevulinate. Its pathway is porphyrin-containing compound metabolism; protoporphyrin-IX biosynthesis; 5-aminolevulinate from L-glutamyl-tRNA(Glu): step 2/2. The protein is Glutamate-1-semialdehyde 2,1-aminomutase 1 of Bacillus cereus (strain AH187).